Consider the following 287-residue polypeptide: Ribonuclease Z (287 aa).

Zn(2+)-binding residues include His-64, His-66, Asp-68, His-69, His-124, Asp-191, and His-250. Residue Asp-68 is the Proton acceptor of the active site.

The protein belongs to the RNase Z family. As to quaternary structure, homodimer. It depends on Zn(2+) as a cofactor.

The catalysed reaction is Endonucleolytic cleavage of RNA, removing extra 3' nucleotides from tRNA precursor, generating 3' termini of tRNAs. A 3'-hydroxy group is left at the tRNA terminus and a 5'-phosphoryl group is left at the trailer molecule.. In terms of biological role, zinc phosphodiesterase, which displays some tRNA 3'-processing endonuclease activity. Probably involved in tRNA maturation, by removing a 3'-trailer from precursor tRNA. The chain is Ribonuclease Z from Pyrobaculum calidifontis (strain DSM 21063 / JCM 11548 / VA1).